The following is a 510-amino-acid chain: MITTNTSSENWDLYRKVTHCLVGHTRLVLSYSGGLDSTVLLDILTRLKNNSDHFTSSPFMLRAIYVHHGISNYSDEWASHCFNQCKIRGIPFSVIHINCYNAENKQRNIEALARNLRYKKLYNRLNSKEILLTAHHMNDQVESLFLALKRGSGPSGLSGMSKNALYANKYRLLRPLLDCSREQLEMYAYKKKLVWIEDDTNTDTRFDRNFLRIKILPSIYQRWPCFNQVVARTAQLCRDQENLLNELLSESFQKLIDESDGSLLFIPLFQYSIPKRQALLRRWLLHFSMKMPSYQLINRIWKEVVLSRKDATPILQLDKYLCRRFREKLYILPVNMRCSLNRIELSWNIIHNVFILPYNLGKLIYQPLSINEHVPKNPFDLHLNINSSLNTSHDVFEKYKKVLTHCFVRSPKSDEKISIIFGNIDGLLYILGRNHGRHLKKIWQELGVPPWLRSRIPLLFYNKTLITAIGVFITHNGKIISKENTLWKISWLQDIISYKIFKNSVRYHLE.

Residue 32–37 (SGGLDS) coordinates ATP.

This sequence belongs to the tRNA(Ile)-lysidine synthase family.

It localises to the cytoplasm. The catalysed reaction is cytidine(34) in tRNA(Ile2) + L-lysine + ATP = lysidine(34) in tRNA(Ile2) + AMP + diphosphate + H(+). Its function is as follows. Ligates lysine onto the cytidine present at position 34 of the AUA codon-specific tRNA(Ile) that contains the anticodon CAU, in an ATP-dependent manner. Cytidine is converted to lysidine, thus changing the amino acid specificity of the tRNA from methionine to isoleucine. The sequence is that of tRNA(Ile)-lysidine synthase from Blochmanniella pennsylvanica (strain BPEN).